A 389-amino-acid polypeptide reads, in one-letter code: Chalcone synthase 2 (389 aa).

The active site involves C164.

It belongs to the thiolase-like superfamily. Chalcone/stilbene synthases family.

It catalyses the reaction (E)-4-coumaroyl-CoA + 3 malonyl-CoA + 3 H(+) = 2',4,4',6'-tetrahydroxychalcone + 3 CO2 + 4 CoA. Its pathway is secondary metabolite biosynthesis; flavonoid biosynthesis. The primary product of this enzyme is 4,2',4',6'-tetrahydroxychalcone (also termed naringenin-chalcone or chalcone) which can under specific conditions spontaneously isomerize into naringenin. The chain is Chalcone synthase 2 (CHS2) from Trifolium subterraneum (Subterranean clover).